Consider the following 310-residue polypeptide: MPRTDNDTWDLSTSVGATATMVAAARAIATNADNPLIEDRFAEPLVRAVGVDFFTRWVTGDLVAADVDDHDSGWKLEHMPVAMAARTRFFDSFFQAATQAGIRQAVILASGLDARAYRLAWPAGTTVFEIDQPQVIEFKTATLAKLGATPQATLRTVAVDLRDDWPKALVEAGFDKGQPTAWIAEGLFGYLPPEAQDRLLDNITALSADGSRLACEAIPDMSEVDTEKAQEMMRRATAKWREHGFDLEFGDLGYQGERNDVAEYLDGLGWRSVGVPMSQLLADAGLEAIPQTNDSVSVADTIYYSSVLAK.

S-adenosyl-L-methionine is bound by residues aspartate 131 and 160–161 (DL).

It belongs to the UPF0677 family.

Functionally, exhibits S-adenosyl-L-methionine-dependent methyltransferase activity. The protein is Putative S-adenosyl-L-methionine-dependent methyltransferase MAP_2076c of Mycolicibacterium paratuberculosis (strain ATCC BAA-968 / K-10) (Mycobacterium paratuberculosis).